A 184-amino-acid chain; its full sequence is Large ribosomal subunit protein uL15 (184 aa).

The interval 1 to 55 (MDLSSLSPAKGSVKNKKRVGRGQGSGNGTTAGKGNKGQQSRSGYKRPVSEGGQMP) is disordered. The segment covering 21 to 35 (RGQGSGNGTTAGKGN) has biased composition (gly residues).

The protein belongs to the universal ribosomal protein uL15 family. Part of the 50S ribosomal subunit.

In terms of biological role, binds to the 23S rRNA. The chain is Large ribosomal subunit protein uL15 from Prosthecochloris aestuarii (strain DSM 271 / SK 413).